Here is a 442-residue protein sequence, read N- to C-terminus: tRNA-2-methylthio-N(6)-dimethylallyladenosine synthase (442 aa).

The MTTase N-terminal domain maps to 3–120; the sequence is NKLYIRTFGC…LPNMLNDALN (118 aa). The [4Fe-4S] cluster site is built by cysteine 12, cysteine 49, cysteine 83, cysteine 157, cysteine 161, and cysteine 164. A Radical SAM core domain is found at 143–375; sequence RTNSVTAFVS…QKTINNNTEH (233 aa). Positions 378–440 constitute a TRAM domain; that stretch reads QLMIGSIQKV…GNSLMGDLLT (63 aa).

The protein belongs to the methylthiotransferase family. MiaB subfamily. Monomer. [4Fe-4S] cluster is required as a cofactor.

Its subcellular location is the cytoplasm. The catalysed reaction is N(6)-dimethylallyladenosine(37) in tRNA + (sulfur carrier)-SH + AH2 + 2 S-adenosyl-L-methionine = 2-methylsulfanyl-N(6)-dimethylallyladenosine(37) in tRNA + (sulfur carrier)-H + 5'-deoxyadenosine + L-methionine + A + S-adenosyl-L-homocysteine + 2 H(+). Catalyzes the methylthiolation of N6-(dimethylallyl)adenosine (i(6)A), leading to the formation of 2-methylthio-N6-(dimethylallyl)adenosine (ms(2)i(6)A) at position 37 in tRNAs that read codons beginning with uridine. In Vesicomyosocius okutanii subsp. Calyptogena okutanii (strain HA), this protein is tRNA-2-methylthio-N(6)-dimethylallyladenosine synthase.